Here is a 382-residue protein sequence, read N- to C-terminus: Kelch domain-containing protein 3 (382 aa).

Kelch repeat units follow at residues 25–77, 88–138, 139–189, 191–249, and 251–301; these read RVYS…PYMR, TVFL…VLGK, TMYI…TMLG, HMYV…GYNG, and LYIF…IVGD.

As to quaternary structure, component of a CRL2(KLHDC3) complex, also named ECS(KLHDC3) complex, composed of CUL2, Elongin BC (ELOB and ELOC), RBX1 and substrate-specific adapter KLHDC3. May form oligomers as a KLHDC3-ELOB-ELOC complex; this interaction is likely autoinhibitory for the E3 ligase complex.

It localises to the cytoplasm. Its pathway is protein modification; protein ubiquitination. Functionally, substrate-recognition component of a Cul2-RING (CRL2) E3 ubiquitin-protein ligase complex of the DesCEND (destruction via C-end degrons) pathway, which recognizes a C-degron located at the extreme C terminus of target proteins, leading to their ubiquitination and degradation. The C-degron recognized by the DesCEND pathway is usually a motif of less than ten residues and can be present in full-length proteins, truncated proteins or proteolytically cleaved forms. The CRL2(KLHDC3) complex specifically recognizes proteins with a glycine (Gly) at the C-terminus, leading to their ubiquitination and degradation: recognizes the C-terminal -Arg-(Xaa)n-Arg-Gly, -Arg-(Xaa)n-Lys-Gly, and -Arg-(Xaa)n-Gln-Gly degrons. The CRL2(KLHDC3) complex mediates ubiquitination and degradation of truncated SELENOV and SEPHS2 selenoproteins produced by failed UGA/Sec decoding, which end with a glycine. May be involved in meiotic recombination process. The protein is Kelch domain-containing protein 3 of Bos taurus (Bovine).